A 505-amino-acid chain; its full sequence is Trans-cinnamate 4-monooxygenase (505 aa).

A helical transmembrane segment spans residues 3–23 (LLLVEKTLLALFAAIIASIFI). (E)-cinnamate-binding positions include 213–218 (RSRLAQ) and alanine 306. Cysteine 447 lines the heme pocket.

Belongs to the cytochrome P450 family. Heme serves as cofactor.

It localises to the membrane. It carries out the reaction (E)-cinnamate + reduced [NADPH--hemoprotein reductase] + O2 = (E)-4-coumarate + oxidized [NADPH--hemoprotein reductase] + H2O + H(+). Its pathway is phenylpropanoid metabolism; trans-4-coumarate biosynthesis; trans-4-coumarate from trans-cinnamate: step 1/1. Its function is as follows. Catalyzes the first oxidative step of the phenylpropanoid pathway in higher plants by transforming trans-cinnamate into p-coumarate. The compounds formed by this pathway are essential components for lignification, pollination, and defense against ultraviolet light, predators and pathogens. The sequence is that of Trans-cinnamate 4-monooxygenase (CYP73A12) from Zinnia elegans (Garden zinnia).